The primary structure comprises 691 residues: Calcium-binding and coiled-coil domain-containing protein 1 (691 aa).

Residues 1–30 are p300 KIX-binding; that stretch reads MEESPLSRAPSRGGVNFLNVARTYIPNTKV. The segment at 1 to 190 is N-terminal AD (CTNNB1 binding site); that stretch reads MEESPLSRAP…VQELERALAT (190 aa). Serine 4 bears the Phosphoserine mark. The segment at 45–125 is interaction with GATA1; that stretch reads SDWIGIFKVE…FQFREPRPMD (81 aa). Coiled-coil stretches lie at residues 145–205, 232–339, and 417–514; these read KATV…YKGI, ELED…AELE, and QSVE…ADEK. The interval 501–691 is C-terminal AD (CTNNB1 binding site); interaction with CCAR1; that stretch reads RKLEARLEKV…FSTQDPFTFE (191 aa). The segment at 514–606 is disordered; it reads KWNEDATTED…SEAEDEKSVL (93 aa). The UBZ1-type zinc finger occupies 653-679; that stretch reads WKECPICKERFPAESDKDALEDHMDGH. Positions 656, 659, 675, and 679 each coordinate Zn(2+).

It belongs to the CALCOCO family. Part of a calphoglin complex consisting of CALCOCO1, PPA1 and PGM. Interacts with the bHLH-PAS domains of GRIP1, AHR and ARNT. Interacts with CTNNB1 via both its N- and C-terminal regions. Interacts with EP300. Interacts with CCAR1 (via N-terminus) and GATA1.

It localises to the cytoplasm. Its subcellular location is the nucleus. In terms of biological role, functions as a coactivator for aryl hydrocarbon and nuclear receptors (NR). Recruited to promoters through its contact with the N-terminal basic helix-loop-helix-Per-Arnt-Sim (PAS) domain of transcription factors or coactivators, such as NCOA2. During ER-activation acts synergistically in combination with other NCOA2-binding proteins, such as EP300, CREBBP and CARM1. Involved in the transcriptional activation of target genes in the Wnt/CTNNB1 pathway. Functions as a secondary coactivator in LEF1-mediated transcriptional activation via its interaction with CTNNB1. Coactivator function for nuclear receptors and LEF1/CTNNB1 involves differential utilization of two different activation regions. In association with CCAR1 enhances GATA1- and MED1-mediated transcriptional activation from the gamma-globin promoter during erythroid differentiation of K562 erythroleukemia cells. Functionally, seems to enhance inorganic pyrophosphatase thus activating phosphogluomutase (PMG). Probably functions as a component of the calphoglin complex, which is involved in linking cellular metabolism (phosphate and glucose metabolism) with other core functions including protein synthesis and degradation, calcium signaling and cell growth. In Homo sapiens (Human), this protein is Calcium-binding and coiled-coil domain-containing protein 1 (CALCOCO1).